The chain runs to 231 residues: Cytochrome c oxidase subunit 2 (231 aa).

Residues 1–14 (MAHPAQLGLQNATS) lie on the Mitochondrial intermembrane side of the membrane. A helical transmembrane segment spans residues 15–45 (PIMEELIAFHDHALMIIFLISSLVLYVISLM). Over 46-59 (LTTKLTHTSTMNAQ) the chain is Mitochondrial matrix. Residues 60–87 (EIEMIWTILPAIILIMIALPSLRILYMT) traverse the membrane as a helical segment. The Mitochondrial intermembrane portion of the chain corresponds to 88 to 231 (DEFNKPYLTL…WASYLYIVSL (144 aa)). Cu cation contacts are provided by histidine 161, cysteine 196, glutamate 198, cysteine 200, histidine 204, and methionine 207. Glutamate 198 is a binding site for Mg(2+).

Belongs to the cytochrome c oxidase subunit 2 family. In terms of assembly, component of the cytochrome c oxidase (complex IV, CIV), a multisubunit enzyme composed of 14 subunits. The complex is composed of a catalytic core of 3 subunits MT-CO1, MT-CO2 and MT-CO3, encoded in the mitochondrial DNA, and 11 supernumerary subunits COX4I, COX5A, COX5B, COX6A, COX6B, COX6C, COX7A, COX7B, COX7C, COX8 and NDUFA4, which are encoded in the nuclear genome. The complex exists as a monomer or a dimer and forms supercomplexes (SCs) in the inner mitochondrial membrane with NADH-ubiquinone oxidoreductase (complex I, CI) and ubiquinol-cytochrome c oxidoreductase (cytochrome b-c1 complex, complex III, CIII), resulting in different assemblies (supercomplex SCI(1)III(2)IV(1) and megacomplex MCI(2)III(2)IV(2)). Found in a complex with TMEM177, COA6, COX18, COX20, SCO1 and SCO2. Interacts with TMEM177 in a COX20-dependent manner. Interacts with COX20. Interacts with COX16. It depends on Cu cation as a cofactor.

The protein resides in the mitochondrion inner membrane. The enzyme catalyses 4 Fe(II)-[cytochrome c] + O2 + 8 H(+)(in) = 4 Fe(III)-[cytochrome c] + 2 H2O + 4 H(+)(out). Functionally, component of the cytochrome c oxidase, the last enzyme in the mitochondrial electron transport chain which drives oxidative phosphorylation. The respiratory chain contains 3 multisubunit complexes succinate dehydrogenase (complex II, CII), ubiquinol-cytochrome c oxidoreductase (cytochrome b-c1 complex, complex III, CIII) and cytochrome c oxidase (complex IV, CIV), that cooperate to transfer electrons derived from NADH and succinate to molecular oxygen, creating an electrochemical gradient over the inner membrane that drives transmembrane transport and the ATP synthase. Cytochrome c oxidase is the component of the respiratory chain that catalyzes the reduction of oxygen to water. Electrons originating from reduced cytochrome c in the intermembrane space (IMS) are transferred via the dinuclear copper A center (CU(A)) of subunit 2 and heme A of subunit 1 to the active site in subunit 1, a binuclear center (BNC) formed by heme A3 and copper B (CU(B)). The BNC reduces molecular oxygen to 2 water molecules using 4 electrons from cytochrome c in the IMS and 4 protons from the mitochondrial matrix. This Alouatta palliata (Mantled howler monkey) protein is Cytochrome c oxidase subunit 2 (MT-CO2).